The chain runs to 726 residues: Fatty acid oxidation complex subunit alpha (726 aa).

The interval 1–189 (MIYQGENLSV…KIGMVDGIVS (189 aa)) is enoyl-CoA hydratase/isomerase. Position 296 (D296) interacts with substrate. Positions 311–726 (EPVKNAAVLG…PKSSVSSPSV (416 aa)) are 3-hydroxyacyl-CoA dehydrogenase. Residues M324, D343, 400–402 (VVE), K407, and S429 each bind NAD(+). The active-site For 3-hydroxyacyl-CoA dehydrogenase activity is H450. N453 provides a ligand contact to NAD(+). 2 residues coordinate substrate: N500 and Y660.

The protein in the N-terminal section; belongs to the enoyl-CoA hydratase/isomerase family. In the C-terminal section; belongs to the 3-hydroxyacyl-CoA dehydrogenase family. In terms of assembly, heterotetramer of two alpha chains (FadB) and two beta chains (FadA).

It carries out the reaction a (3S)-3-hydroxyacyl-CoA + NAD(+) = a 3-oxoacyl-CoA + NADH + H(+). The enzyme catalyses a (3S)-3-hydroxyacyl-CoA = a (2E)-enoyl-CoA + H2O. It catalyses the reaction a 4-saturated-(3S)-3-hydroxyacyl-CoA = a (3E)-enoyl-CoA + H2O. The catalysed reaction is (3S)-3-hydroxybutanoyl-CoA = (3R)-3-hydroxybutanoyl-CoA. It carries out the reaction a (3Z)-enoyl-CoA = a 4-saturated (2E)-enoyl-CoA. The enzyme catalyses a (3E)-enoyl-CoA = a 4-saturated (2E)-enoyl-CoA. It functions in the pathway lipid metabolism; fatty acid beta-oxidation. Functionally, involved in the aerobic and anaerobic degradation of long-chain fatty acids via beta-oxidation cycle. Catalyzes the formation of 3-oxoacyl-CoA from enoyl-CoA via L-3-hydroxyacyl-CoA. It can also use D-3-hydroxyacyl-CoA and cis-3-enoyl-CoA as substrate. This is Fatty acid oxidation complex subunit alpha from Aliivibrio salmonicida (strain LFI1238) (Vibrio salmonicida (strain LFI1238)).